The following is a 231-amino-acid chain: (S)-2-haloacid dehalogenase 4A (231 aa).

The active-site Nucleophile is the Asp11. Residues 12–13 (AY), Arg42, and 119–120 (SN) contribute to the an (S)-2-haloacid site. Residues 176–181 (SSNAWD) are important for catalytic activity.

This sequence belongs to the HAD-like hydrolase superfamily. S-2-haloalkanoic acid dehalogenase family.

It carries out the reaction an (S)-2-haloacid + H2O = a (2R)-2-hydroxycarboxylate + a halide anion + H(+). It catalyses the reaction (S)-2-chloropropanoate + H2O = (R)-lactate + chloride + H(+). Its function is as follows. Catalyzes the hydrolytic dehalogenation of small (S)-2-haloalkanoic acids to yield the corresponding (R)-2-hydroxyalkanoic acids. Acts on acids of short chain lengths, C(2) to C(4), with inversion of configuration at C-3. Active with 2-halogenated carboxylic acids and converts only the S-isomer (or L-isomer) of 2-chloropropionic acid with inversion of configuration to produce R-lactate (or D-isomer). The sequence is that of (S)-2-haloacid dehalogenase 4A from Burkholderia cepacia (Pseudomonas cepacia).